The following is a 287-amino-acid chain: 3-methyl-2-oxobutanoate hydroxymethyltransferase (287 aa).

Residues 1 to 19 (MSTLPKTLTLDTSTSRANP) show a composition bias toward polar residues. The segment at 1 to 24 (MSTLPKTLTLDTSTSRANPTPQPM) is disordered. The Mg(2+) site is built by Asp66 and Asp105. 3-methyl-2-oxobutanoate contacts are provided by residues 66 to 67 (DS), Asp105, and Lys135. Glu137 provides a ligand contact to Mg(2+). Glu204 serves as the catalytic Proton acceptor.

The protein belongs to the PanB family. As to quaternary structure, homodecamer; pentamer of dimers. Mg(2+) serves as cofactor.

It is found in the cytoplasm. The catalysed reaction is 3-methyl-2-oxobutanoate + (6R)-5,10-methylene-5,6,7,8-tetrahydrofolate + H2O = 2-dehydropantoate + (6S)-5,6,7,8-tetrahydrofolate. It functions in the pathway cofactor biosynthesis; (R)-pantothenate biosynthesis; (R)-pantoate from 3-methyl-2-oxobutanoate: step 1/2. Its function is as follows. Catalyzes the reversible reaction in which hydroxymethyl group from 5,10-methylenetetrahydrofolate is transferred onto alpha-ketoisovalerate to form ketopantoate. This chain is 3-methyl-2-oxobutanoate hydroxymethyltransferase, found in Sphingopyxis alaskensis (strain DSM 13593 / LMG 18877 / RB2256) (Sphingomonas alaskensis).